Reading from the N-terminus, the 176-residue chain is Probable chorismate pyruvate-lyase (176 aa).

Residues Arg-70, Leu-108, and Glu-166 each coordinate substrate.

The protein belongs to the UbiC family.

It localises to the cytoplasm. The catalysed reaction is chorismate = 4-hydroxybenzoate + pyruvate. The protein operates within cofactor biosynthesis; ubiquinone biosynthesis. Functionally, removes the pyruvyl group from chorismate, with concomitant aromatization of the ring, to provide 4-hydroxybenzoate (4HB) for the ubiquinone pathway. The polypeptide is Probable chorismate pyruvate-lyase (Dechloromonas aromatica (strain RCB)).